Consider the following 126-residue polypeptide: UPF0538 protein C2orf76 (126 aa).

This sequence belongs to the UPF0538 family.

This Homo sapiens (Human) protein is UPF0538 protein C2orf76 (C2orf76).